A 251-amino-acid chain; its full sequence is Chlorocatechol 1,2-dioxygenase (251 aa).

Fe cation is bound by residues Tyr130, Tyr164, His188, and His190.

The protein belongs to the intradiol ring-cleavage dioxygenase family. Fe(3+) serves as cofactor.

The catalysed reaction is 3-chlorocatechol + O2 = (2E,4Z)-2-chloromuconate + 2 H(+). It carries out the reaction 3,4-dichlorocatechol + O2 = (2Z,4Z)-2,3-dichloromuconate + 2 H(+). The enzyme catalyses 3,5-dichlorocatechol + O2 = (2E,4E)-2,4-dichloromuconate + 2 H(+). It catalyses the reaction 3,6-dichlorocatechol + O2 = (2E,4E)-2,5-dichloromuconate + H(+). The catalysed reaction is 3,4,6-trichlorocatechol + O2 = (2Z,4E)-2,3,5-trichloromuconate + H(+). The protein operates within xenobiotic degradation. In terms of biological role, chlorocatechol 1,2-dioxygenase involved in the degradation of chlorinated benzenes, that occurs via chlorocatechol intermediates. Displays broad substrate specificity. Preferentially cleaves 3-chlorocatechol and 3,4-dichlorocatechol, and shows lower activity on 3,5-dichlorocatechol, 3,6-dichlorocatechol and 3,4,6-trichlorocatechol in vitro. Is not able to convert 3,4,5-trichlorocatechol and 3,4,5,6-tetrachlorocatechol. Thus, probably functions in the degradation pathways of 1,2-dichlorobenzene, 1,4-dichlorobenzene and 1,2,4-trichlorobenzene (via 3,4-dichlorocatechol, 3,6-dichlorocatechol and 3,4,6-trichlorocatechol intermediates, respectively), which allow Pseudomonas sp. strain P51 to grow on these substrates as the sole carbon and energy source. This Pseudomonas sp. (strain P51) protein is Chlorocatechol 1,2-dioxygenase.